Reading from the N-terminus, the 439-residue chain is GTPase Der (439 aa).

2 EngA-type G domains span residues 3 to 167 (PLVA…PKSS) and 176 to 351 (TRIA…AQYS). GTP-binding positions include 9 to 16 (GRPNVGKS), 56 to 60 (DTGGF), 119 to 122 (NKVD), 182 to 189 (GRPNVGKS), 229 to 233 (DTAGI), and 294 to 297 (NKWD). The KH-like domain maps to 352–436 (KRVSTSDLNR…PLKIIFRGRD (85 aa)).

Belongs to the TRAFAC class TrmE-Era-EngA-EngB-Septin-like GTPase superfamily. EngA (Der) GTPase family. Associates with the 50S ribosomal subunit.

GTPase that plays an essential role in the late steps of ribosome biogenesis. This is GTPase Der from Geobacter metallireducens (strain ATCC 53774 / DSM 7210 / GS-15).